The following is a 783-amino-acid chain: Mitochondrial intermediate peptidase (783 aa).

Residues 1–33 (MKAGIPLSRCTQRIPLLVARQVSRNITTTTTKF) constitute a mitochondrion transit peptide. Histidine 565 provides a ligand contact to Zn(2+). Residue glutamate 566 is part of the active site. Residues histidine 569 and histidine 572 each contribute to the Zn(2+) site.

It belongs to the peptidase M3 family. It depends on Zn(2+) as a cofactor.

It localises to the mitochondrion matrix. It catalyses the reaction Release of an N-terminal octapeptide as second stage of processing of some proteins imported into the mitochondrion.. In terms of biological role, cleaves proteins, imported into the mitochondrion, to their mature size. While most mitochondrial precursor proteins are processed to the mature form in one step by mitochondrial processing peptidase (MPP), the sequential cleavage by MIP of an octapeptide after initial processing by MPP is a required step for a subgroup of nuclear-encoded precursor proteins destined for the matrix or the inner membrane. This chain is Mitochondrial intermediate peptidase (OCT1), found in Candida albicans (strain SC5314 / ATCC MYA-2876) (Yeast).